Consider the following 580-residue polypeptide: MIKHDSIRLLATNLLKDAIGRAYPDFSASEDDIYKALVNPPKSDLGDLAFGCFILAKALKTAPPQVATAVAAQMKGATAVAAGPYINIRFDEQTHGEQVLATILDGSYFKKPLMEKSPKTMIEYSQPNTHKELHVGHMRNLCLGDAIVRMLRYSGREIVSSTFPGDMGTHVAKCLWYMKKHNQEPVPETEKGEWLGRMYSKANLLLEDQNGTPQEDINRQELTAILHQLEGKTGPYYDLWLETREWSIELMKKVYAWADVTFDEWYFESEMDSPSAAWVKQLYAEGKLEMSQGAIGKDLESEKLGFCMLLKSDGTGLYATKDLLLAKHKFEDVKIEKSVYVVDMRQALHFKQVFRVLEILGFEQAKNCFHLQYNYVELPDGAMSSRKGNIVPLRELVHRMEDHVKTTYLSRYKGEWSEEDVEKIAGQVAKGAIFYGMLRMDTNKKIVFDMNEWLKLDGESGPFVQYSYARISSLGRKFPRTAGAKIDWSRLNHASERQLMQSLGGFNTAVAAAAENFKPSAICTYLYDLAKSFNVFYHECPIGTEADVATREARLALSEAVGLTLKNGLAVLGMPAPEKM.

The 'HIGH' region signature appears at 127-137 (PNTHKELHVGH).

It belongs to the class-I aminoacyl-tRNA synthetase family. In terms of assembly, monomer.

The protein localises to the cytoplasm. The catalysed reaction is tRNA(Arg) + L-arginine + ATP = L-arginyl-tRNA(Arg) + AMP + diphosphate. The chain is Arginine--tRNA ligase from Bdellovibrio bacteriovorus (strain ATCC 15356 / DSM 50701 / NCIMB 9529 / HD100).